The chain runs to 333 residues: Cell division protein ZipA (333 aa).

Residues 1 to 5 (MQELR) lie on the Periplasmic side of the membrane. Residues 6–26 (LVLILVGALAIAALLFHGLWT) form a helical membrane-spanning segment. The Cytoplasmic portion of the chain corresponds to 27 to 333 (SRKETSSKFG…KQRVKVFCRK (307 aa)). A compositionally biased stretch (basic and acidic residues) spans 72-81 (KEPAFAREEV). The interval 72-119 (KEPAFAREEVPTSDDPLFEGTVSSESNKFTQQEKPTVQQAQPQPQPQP) is disordered. Polar residues predominate over residues 92–107 (TVSSESNKFTQQEKPT). The segment covering 108–119 (VQQAQPQPQPQP) has biased composition (low complexity).

The protein belongs to the ZipA family. In terms of assembly, interacts with FtsZ via their C-terminal domains.

The protein localises to the cell inner membrane. Its function is as follows. Essential cell division protein that stabilizes the FtsZ protofilaments by cross-linking them and that serves as a cytoplasmic membrane anchor for the Z ring. Also required for the recruitment to the septal ring of downstream cell division proteins. This is Cell division protein ZipA from Aliivibrio fischeri (strain ATCC 700601 / ES114) (Vibrio fischeri).